We begin with the raw amino-acid sequence, 127 residues long: Large ribosomal subunit protein eL32 (127 aa).

Residues 38–48 show a composition bias toward basic and acidic residues; the sequence is WRRPKGIDSKM. The interval 38 to 66 is disordered; that stretch reads WRRPKGIDSKMRLKKKGKPRSPSIGWSSP.

Belongs to the eukaryotic ribosomal protein eL32 family.

The polypeptide is Large ribosomal subunit protein eL32 (Thermococcus gammatolerans (strain DSM 15229 / JCM 11827 / EJ3)).